The primary structure comprises 662 residues: Putative cysteine-rich receptor-like protein kinase 16 (662 aa).

The N-terminal stretch at 1–26 (MIFIMKLKNLLPIFCFFLVSFSISSA) is a signal peptide. Gnk2-homologous domains are found at residues 27–131 (QKCG…NRSF) and 137–244 (MTPF…LYQF). Topologically, residues 27 to 277 (QKCGKTGLFK…DDGGKISTRN (251 aa)) are extracellular. Asn-55, Asn-64, Asn-106, Asn-128, Asn-145, Asn-152, and Asn-206 each carry an N-linked (GlcNAc...) asparagine glycan. Residues 278-298 (ILGITVALAFFITVLLVLGYA) traverse the membrane as a helical segment. At 299–662 (LSRRRKAYQE…DASITSVDLR (364 aa)) the chain is on the cytoplasmic side. Residues 335–612 (FQKSNKLGHG…VFQMLTNTFL (278 aa)) enclose the Protein kinase domain. ATP is bound by residues 341-349 (LGHGGFGEV) and Lys-363. The active-site Proton acceptor is the Asp-460.

This sequence belongs to the protein kinase superfamily. Ser/Thr protein kinase family. CRK subfamily.

The protein resides in the membrane. The enzyme catalyses L-seryl-[protein] + ATP = O-phospho-L-seryl-[protein] + ADP + H(+). The catalysed reaction is L-threonyl-[protein] + ATP = O-phospho-L-threonyl-[protein] + ADP + H(+). The chain is Putative cysteine-rich receptor-like protein kinase 16 (CRK16) from Arabidopsis thaliana (Mouse-ear cress).